A 679-amino-acid polypeptide reads, in one-letter code: Methionine--tRNA ligase (679 aa).

A 'HIGH' region motif is present at residues 15–25; sequence PYANGPIHLGH. Zn(2+)-binding residues include cysteine 146, cysteine 149, cysteine 159, and cysteine 162. The 'KMSKS' region signature appears at 332–336; the sequence is KMSKS. Lysine 335 is an ATP binding site. One can recognise a tRNA-binding domain in the interval 578–679; that stretch reads DFAKIDLRIA…EGAQPGMKVK (102 aa).

This sequence belongs to the class-I aminoacyl-tRNA synthetase family. MetG type 1 subfamily. As to quaternary structure, homodimer. The cofactor is Zn(2+).

The protein resides in the cytoplasm. The catalysed reaction is tRNA(Met) + L-methionine + ATP = L-methionyl-tRNA(Met) + AMP + diphosphate. Is required not only for elongation of protein synthesis but also for the initiation of all mRNA translation through initiator tRNA(fMet) aminoacylation. This chain is Methionine--tRNA ligase, found in Shewanella pealeana (strain ATCC 700345 / ANG-SQ1).